A 60-amino-acid chain; its full sequence is Large ribosomal subunit protein bL32 (60 aa).

The interval 1–60 is disordered; the sequence is MAVQQNKKSPSKRGMHRSHNALTVPGIAVESTTGETHLRHHISPTGFYRGRKVLKTKSEA. Composition is skewed to basic residues over residues 9-19 and 49-60; these read SPSKRGMHRSH and RGRKVLKTKSEA.

Belongs to the bacterial ribosomal protein bL32 family.

The protein is Large ribosomal subunit protein bL32 of Polaromonas sp. (strain JS666 / ATCC BAA-500).